Here is a 139-residue protein sequence, read N- to C-terminus: AP-4 complex subunit sigma (139 aa).

The protein belongs to the adaptor complexes small subunit family. As to quaternary structure, may be part of the adaptor protein complex 4 (AP-4), a heterotetramer composed of two large adaptins (epsilon-type subunitand beta-type subunit), a medium adaptin (mu-type subunit) and a small adaptin (sigma-type).

It localises to the golgi apparatus. The protein resides in the trans-Golgi network membrane. In terms of biological role, probable component of an adaptor protein complex. Adaptor protein complexes are vesicle coat components involved both in vesicle formation and cargo selection. They control the vesicular transport of proteins in different trafficking pathways. This Dictyostelium discoideum (Social amoeba) protein is AP-4 complex subunit sigma.